A 192-amino-acid polypeptide reads, in one-letter code: Transmembrane protein 276 (192 aa).

The signal sequence occupies residues 1-32; it reads MVSKPRNEWSTALSHLVLAGVSLHAAVSSVQS. Helical transmembrane passes span 35–55, 63–83, 92–112, and 114–134; these read GAAA…APEL, AGAW…FHWV, LLLG…PEGC, and VAGQ…AVFT.

It is found in the membrane. This chain is Transmembrane protein 276, found in Rattus norvegicus (Rat).